Here is a 205-residue protein sequence, read N- to C-terminus: Probable DNA-binding protein (205 aa).

Residues 140 to 168 (GEGDGAPRPACPDFSTRGAETGNQGVQPG) are disordered.

The chain is Probable DNA-binding protein from Homo sapiens (Human).